Here is a 316-residue protein sequence, read N- to C-terminus: Lipoyl synthase (316 aa).

Basic and acidic residues predominate over residues 1–15 (MKARNESMSKGEYKT). Positions 1-33 (MKARNESMSKGEYKTKSLKNRPDPTQPKLKKPS) are disordered. [4Fe-4S] cluster contacts are provided by C64, C69, C75, C90, C94, C97, and S304. Residues 76–293 (FGHGTATFMI…EQAGMEMGFT (218 aa)) enclose the Radical SAM core domain.

Belongs to the radical SAM superfamily. Lipoyl synthase family. [4Fe-4S] cluster is required as a cofactor.

Its subcellular location is the cytoplasm. It catalyses the reaction [[Fe-S] cluster scaffold protein carrying a second [4Fe-4S](2+) cluster] + N(6)-octanoyl-L-lysyl-[protein] + 2 oxidized [2Fe-2S]-[ferredoxin] + 2 S-adenosyl-L-methionine + 4 H(+) = [[Fe-S] cluster scaffold protein] + N(6)-[(R)-dihydrolipoyl]-L-lysyl-[protein] + 4 Fe(3+) + 2 hydrogen sulfide + 2 5'-deoxyadenosine + 2 L-methionine + 2 reduced [2Fe-2S]-[ferredoxin]. It participates in protein modification; protein lipoylation via endogenous pathway; protein N(6)-(lipoyl)lysine from octanoyl-[acyl-carrier-protein]: step 2/2. Catalyzes the radical-mediated insertion of two sulfur atoms into the C-6 and C-8 positions of the octanoyl moiety bound to the lipoyl domains of lipoate-dependent enzymes, thereby converting the octanoylated domains into lipoylated derivatives. This is Lipoyl synthase from Hydrogenovibrio crunogenus (strain DSM 25203 / XCL-2) (Thiomicrospira crunogena).